A 627-amino-acid polypeptide reads, in one-letter code: uncharacterized protein (627 aa).

7 disordered regions span residues 57–82, 96–121, 160–184, 198–232, 247–277, 335–358, and 449–579; these read EDAMGSESAEMDSPHATARPQEQGED, PEAQEPPVSSGGPEDPEAPAQHAPPG, GCSHAPGGESSSDQAADAPAGDAAY, AQSQDDRVDLSAAMSSVVTEEPPEPRGCSMPCPSG, SHDAPEYPVDSDPITYSASEPSSEGPVRGAP, RQAGAEPAQAPATAPAPEGTEAAY, and VFDV…PPLS. Over residues 169–183 the composition is skewed to low complexity; it reads SSSDQAADAPAGDAA. The span at 336–357 shows a compositional bias: low complexity; the sequence is QAGAEPAQAPATAPAPEGTEAA. Positions 450–464 are enriched in basic and acidic residues; it reads FDVKEQGAHADRDAA.

This is an uncharacterized protein from Treponema pallidum (strain Nichols).